The following is a 274-amino-acid chain: Phosphatidylglycerol--prolipoprotein diacylglyceryl transferase (274 aa).

4 consecutive transmembrane segments (helical) span residues 16–36 (VGLHLSWYGIFFSLGIFLSSF), 62–82 (FALGALLVIVIGARAFYVLFY), 94–114 (IIKIWKGGLSSHGAIIALVIW), and 129–149 (LSVTYICDICGAVFGVAALLI). R150 serves as a coordination point for a 1,2-diacyl-sn-glycero-3-phospho-(1'-sn-glycerol). The next 3 helical transmembrane spans lie at 184 to 204 (VQLYEGVSYLLLSLVLYWLCY), 213 to 233 (GYSAAGALIGVASIRFCAEFF), and 247 to 267 (LTIGQWLSIPMVFLGIGILWI).

The protein belongs to the Lgt family.

It localises to the cell inner membrane. The catalysed reaction is L-cysteinyl-[prolipoprotein] + a 1,2-diacyl-sn-glycero-3-phospho-(1'-sn-glycerol) = an S-1,2-diacyl-sn-glyceryl-L-cysteinyl-[prolipoprotein] + sn-glycerol 1-phosphate + H(+). Its pathway is protein modification; lipoprotein biosynthesis (diacylglyceryl transfer). Its function is as follows. Catalyzes the transfer of the diacylglyceryl group from phosphatidylglycerol to the sulfhydryl group of the N-terminal cysteine of a prolipoprotein, the first step in the formation of mature lipoproteins. This Chlamydia muridarum (strain MoPn / Nigg) protein is Phosphatidylglycerol--prolipoprotein diacylglyceryl transferase.